A 145-amino-acid chain; its full sequence is Basic phospholipase A2 PC16 (145 aa).

An N-terminal signal peptide occupies residues 1-21 (MYPAHLLLLLAVCVSLLGASA). A propeptide spanning residues 22 to 27 (IPPLPL) is cleaved from the precursor. 7 disulfides stabilise this stretch: Cys38-Cys98, Cys54-Cys144, Cys56-Cys72, Cys71-Cys125, Cys78-Cys118, Cys87-Cys111, and Cys105-Cys116. Ca(2+)-binding residues include Tyr55, Gly57, and Gly59. His75 is an active-site residue. Asp76 contributes to the Ca(2+) binding site. Residue Asp119 is part of the active site.

This sequence belongs to the phospholipase A2 family. Group I subfamily. D49 sub-subfamily. Ca(2+) serves as cofactor.

The protein localises to the secreted. The enzyme catalyses a 1,2-diacyl-sn-glycero-3-phosphocholine + H2O = a 1-acyl-sn-glycero-3-phosphocholine + a fatty acid + H(+). Functionally, PLA2 catalyzes the calcium-dependent hydrolysis of the 2-acyl groups in 3-sn-phosphoglycerides. This chain is Basic phospholipase A2 PC16, found in Laticauda laticaudata (Blue-ringed sea krait).